A 249-amino-acid chain; its full sequence is Mediator of RNA polymerase II transcription subunit 8 (249 aa).

Positions 1–26 (MQREEKQLDMLLEAVLNRLNDLKHSI) form a coiled coil. Composition is skewed to polar residues over residues 215–224 (SPMSAVSPSG) and 235–249 (IKTNIKSANQVHPYR). The disordered stretch occupies residues 215 to 249 (SPMSAVSPSGNAPMGKMPSGIKTNIKSANQVHPYR).

It belongs to the Mediator complex subunit 8 family. Component of the Mediator complex.

The protein resides in the nucleus. Functionally, component of the Mediator complex, a coactivator involved in the regulated transcription of nearly all RNA polymerase II-dependent genes. Mediator functions as a bridge to convey information from gene-specific regulatory proteins to the basal RNA polymerase II transcription machinery. Mediator is recruited to promoters by direct interactions with regulatory proteins and serves as a scaffold for the assembly of a functional preinitiation complex with RNA polymerase II and the general transcription factors. In Anopheles gambiae (African malaria mosquito), this protein is Mediator of RNA polymerase II transcription subunit 8 (MED8).